The following is a 171-amino-acid chain: MLQEPINLPKWLEENQHLLKPPVNNFCIQRGGYTVMIVGGPNARTDYHINQTPEWFHQKKGHMTLKVVDDGEFRDITINEGDIFLLPANVPHNPVRYADTIGVVVEQDRPEGMKDALRWYCPNEKCREIVFENSFQLVDLGTQIKEAILDFDGDIEKRTCKACGTVATSRP.

An O2-binding site is contributed by Arg44. Residues His48, Glu54, and His92 each contribute to the Fe cation site. Glu54 lines the substrate pocket. Positions 96 and 106 each coordinate substrate. A divalent metal cation-binding residues include Cys121, Cys126, Cys160, and Cys163.

It belongs to the 3-HAO family. It depends on Fe(2+) as a cofactor.

The protein resides in the cytoplasm. It catalyses the reaction 3-hydroxyanthranilate + O2 = (2Z,4Z)-2-amino-3-carboxymuconate 6-semialdehyde. It functions in the pathway cofactor biosynthesis; NAD(+) biosynthesis; quinolinate from L-kynurenine: step 3/3. Its function is as follows. Catalyzes the oxidative ring opening of 3-hydroxyanthranilate to 2-amino-3-carboxymuconate semialdehyde, which spontaneously cyclizes to quinolinate. This Yarrowia lipolytica (strain CLIB 122 / E 150) (Yeast) protein is 3-hydroxyanthranilate 3,4-dioxygenase.